The sequence spans 205 residues: Recombination protein RecR (205 aa).

The segment at 64–79 (CSRCYFITQNDLCAIC) adopts a C4-type zinc-finger fold. A Toprim domain is found at 87-182 (RIVCVVEEPL…RVTRLARGLP (96 aa)).

It belongs to the RecR family.

May play a role in DNA repair. It seems to be involved in an RecBC-independent recombinational process of DNA repair. It may act with RecF and RecO. This is Recombination protein RecR from Roseiflexus castenholzii (strain DSM 13941 / HLO8).